Here is a 961-residue protein sequence, read N- to C-terminus: Probable exosome complex exonuclease RRP44 (961 aa).

The PINc domain occupies 73-188; it reads HALIVDSTSL…LVFDEDSKKR (116 aa). The CSD1 domain maps to 232 to 338; it reads IFDEYLSHDR…DEENDDENDE (107 aa). Residues 322 to 346 form a disordered region; sequence ADDMGNEDEENDDENDEPKAKKSKK. Acidic residues predominate over residues 325 to 337; the sequence is MGNEDEENDDEND. Residues 381–447 form the CSD2 domain; that stretch reads LFCPAERLIP…ENEVLLLEHD (67 aa). The region spanning 479–809 is the RNB domain; that stretch reads RVDLRDLTIC…IVHRLLAAAI (331 aa).

This sequence belongs to the RNR ribonuclease family. As to quaternary structure, component of the RNA exosome complex. As to expression, ubiquitously expressed.

The protein resides in the nucleus. It localises to the nucleoplasm. In terms of biological role, putative catalytic component of the RNA exosome complex which has 3'-&gt;5' exoribonuclease activity and participates in a multitude of cellular RNA processing and degradation events. Has both 3'-5' exonuclease and endonuclease activities. Involved in regulation of antisense ribosomal siRNA production. The protein is Probable exosome complex exonuclease RRP44 (dis-3) of Caenorhabditis elegans.